The following is a 105-amino-acid chain: Mitomycin resistance protein McrB (105 aa).

Its function is as follows. Involved in mitomycin resistance. May operate with McrA or may be a type of transcriptional activator protein. The polypeptide is Mitomycin resistance protein McrB (mcrB) (Streptomyces lavendulae).